Consider the following 225-residue polypeptide: Uracil-DNA glycosylase (225 aa).

Residue aspartate 65 is the Proton acceptor of the active site.

It belongs to the uracil-DNA glycosylase (UDG) superfamily. UNG family.

The protein localises to the cytoplasm. The enzyme catalyses Hydrolyzes single-stranded DNA or mismatched double-stranded DNA and polynucleotides, releasing free uracil.. Excises uracil residues from the DNA which can arise as a result of misincorporation of dUMP residues by DNA polymerase or due to deamination of cytosine. This is Uracil-DNA glycosylase from Bacillus cereus (strain ZK / E33L).